A 541-amino-acid chain; its full sequence is Pseudokinase FAM20A (541 aa).

The N-terminal stretch at 1-33 (MPGLRRDRLLTLLLLGALLSADLYFHLWPQVQR) is a signal peptide. The interval 38 to 90 (RERPRGCPCTGRASSLARDSAAAASDPGTIVHNFSRTEPRTEPAGGSHSGSSS) is disordered. A compositionally biased stretch (low complexity) spans 49–63 (RASSLARDSAAAASD). N-linked (GlcNAc...) asparagine glycans are attached at residues Asn-70, Asn-145, and Asn-287. Cystine bridges form between Cys-314–Cys-330, Cys-319–Cys-323, Cys-378–Cys-452, and Cys-453–Cys-512. Residue Asn-388 is glycosylated (N-linked (GlcNAc...) asparagine). Asn-538 is a glycosylation site (N-linked (GlcNAc...) asparagine).

Belongs to the FAM20 family. As to quaternary structure, interacts with FAM20C; probably forming a heterotetramer of 2 subunits of FAM20A and 2 subunits of FAM20C. N-glycosylated. As to expression, highly expressed in lung and liver. Intermediate levels in thymus and ovary.

Its subcellular location is the secreted. It is found in the golgi apparatus. It localises to the endoplasmic reticulum. Pseudokinase that acts as an allosteric activator of the Golgi serine/threonine protein kinase FAM20C and is involved in biomineralization of teeth. Forms a complex with FAM20C and increases the ability of FAM20C to phosphorylate the proteins that form the 'matrix' that guides the deposition of the enamel minerals. The protein is Pseudokinase FAM20A of Homo sapiens (Human).